Reading from the N-terminus, the 230-residue chain is Mediator of RNA polymerase II transcription subunit 7 (230 aa).

Disordered regions lie at residues 1–22 (MSREESVSGANDVSSLYPPPPP) and 206–230 (QSQSQSQSQSQSQSQSQSQLQSDSQ).

It belongs to the Mediator complex subunit 7 family. In terms of assembly, component of the Mediator complex.

The protein resides in the nucleus. Functionally, component of the Mediator complex, a coactivator involved in the regulated transcription of nearly all RNA polymerase II-dependent genes. Mediator functions as a bridge to convey information from gene-specific regulatory proteins to the basal RNA polymerase II transcription machinery. Mediator is recruited to promoters by direct interactions with regulatory proteins and serves as a scaffold for the assembly of a functional preinitiation complex with RNA polymerase II and the general transcription factors. The polypeptide is Mediator of RNA polymerase II transcription subunit 7 (MED7) (Candida glabrata (strain ATCC 2001 / BCRC 20586 / JCM 3761 / NBRC 0622 / NRRL Y-65 / CBS 138) (Yeast)).